The following is a 132-amino-acid chain: Small ribosomal subunit protein uS8 (132 aa).

This sequence belongs to the universal ribosomal protein uS8 family. In terms of assembly, part of the 30S ribosomal subunit. Contacts proteins S5 and S12.

Its function is as follows. One of the primary rRNA binding proteins, it binds directly to 16S rRNA central domain where it helps coordinate assembly of the platform of the 30S subunit. The polypeptide is Small ribosomal subunit protein uS8 (Lactobacillus acidophilus (strain ATCC 700396 / NCK56 / N2 / NCFM)).